The chain runs to 336 residues: NADH-quinone oxidoreductase subunit H (336 aa).

Helical transmembrane passes span Ile-14–Val-34, Ile-82–Ile-102, Val-115–Gly-135, Ile-161–Val-181, Thr-186–Ala-206, Ile-247–Val-267, Val-273–Val-293, and Val-312–Asp-332.

This sequence belongs to the complex I subunit 1 family. As to quaternary structure, NDH-1 is composed of 14 different subunits. Subunits NuoA, H, J, K, L, M, N constitute the membrane sector of the complex.

The protein resides in the cell inner membrane. The enzyme catalyses a quinone + NADH + 5 H(+)(in) = a quinol + NAD(+) + 4 H(+)(out). NDH-1 shuttles electrons from NADH, via FMN and iron-sulfur (Fe-S) centers, to quinones in the respiratory chain. The immediate electron acceptor for the enzyme in this species is believed to be ubiquinone. Couples the redox reaction to proton translocation (for every two electrons transferred, four hydrogen ions are translocated across the cytoplasmic membrane), and thus conserves the redox energy in a proton gradient. This subunit may bind ubiquinone. The sequence is that of NADH-quinone oxidoreductase subunit H from Rhodospirillum centenum (strain ATCC 51521 / SW).